The sequence spans 467 residues: Involucrin (467 aa).

The segment at 48–467 is disordered; the sequence is EIQEKGFPKH…ELENRTQQEK (420 aa). A compositionally biased stretch (basic and acidic residues) spans 49-75; that stretch reads IQEKGFPKHEEKRPNPVKDLPDQKCEH. 2 stretches are compositionally biased toward low complexity: residues 76–95 and 105–177; these read QQQPGPQKQQLQVKKSQQEL and QQLP…VPQE. 2 stretches are compositionally biased toward basic and acidic residues: residues 178–192 and 220–231; these read LHLRQHQEKLQDPEL and RHQEPQEQELHL. Positions 278-290 are enriched in low complexity; the sequence is QQQQESPEPELQL. Basic and acidic residues-rich tracts occupy residues 295–318, 348–373, 380–391, 415–437, and 450–467; these read QSHEPDMAGDQKEKQKLHKPELYL, LEEKQHQKPPEPELHLGKQQESHEPD, EKQKLGEPELHL, KQEKASREQQLDYSHLEQEKELS, and KQLERKKHELENRTQQEK.

It belongs to the involucrin family. Directly or indirectly cross-linked to cornifelin (CNFN). Substrate of transglutaminase. Specific glutamines or lysines are cross-linked to keratins, desmoplakin and to inter involucrin molecules. As to expression, keratinocytes of epidermis and other stratified squamous epithelia.

It localises to the cytoplasm. Functionally, part of the insoluble cornified cell envelope (CE) of stratified squamous epithelia. The polypeptide is Involucrin (Ivl) (Mus musculus (Mouse)).